Consider the following 135-residue polypeptide: Basic phospholipase A2 10 (135 aa).

7 disulfide bridges follow: cysteine 28-cysteine 87, cysteine 42-cysteine 134, cysteine 44-cysteine 60, cysteine 59-cysteine 115, cysteine 66-cysteine 108, cysteine 76-cysteine 101, and cysteine 94-cysteine 106. Tyrosine 43, glycine 45, and glycine 47 together coordinate Ca(2+). Residue histidine 63 is part of the active site. Position 64 (aspartate 64) interacts with Ca(2+). Aspartate 109 is a catalytic residue.

This sequence belongs to the phospholipase A2 family. Group I subfamily. D49 sub-subfamily. The cofactor is Ca(2+). Expressed by the venom gland.

It localises to the secreted. It carries out the reaction a 1,2-diacyl-sn-glycero-3-phosphocholine + H2O = a 1-acyl-sn-glycero-3-phosphocholine + a fatty acid + H(+). Functionally, snake venom phospholipase A2 (PLA2) that inhibits neuromuscular transmission by blocking acetylcholine release from the nerve termini. PLA2 catalyzes the calcium-dependent hydrolysis of the 2-acyl groups in 3-sn-phosphoglycerides. The sequence is that of Basic phospholipase A2 10 from Bungarus fasciatus (Banded krait).